The following is a 339-amino-acid chain: Anthranilate phosphoribosyltransferase (339 aa).

5-phospho-alpha-D-ribose 1-diphosphate contacts are provided by residues G81, 84–85 (GD), T89, 91–94 (NVST), 109–117 (KHGNRSVSS), and S121. G81 is a binding site for anthranilate. S93 serves as a coordination point for Mg(2+). Anthranilate is bound at residue N112. Residue R167 coordinates anthranilate. D226 and E227 together coordinate Mg(2+).

Belongs to the anthranilate phosphoribosyltransferase family. In terms of assembly, homodimer. Requires Mg(2+) as cofactor.

The catalysed reaction is N-(5-phospho-beta-D-ribosyl)anthranilate + diphosphate = 5-phospho-alpha-D-ribose 1-diphosphate + anthranilate. It participates in amino-acid biosynthesis; L-tryptophan biosynthesis; L-tryptophan from chorismate: step 2/5. Its function is as follows. Catalyzes the transfer of the phosphoribosyl group of 5-phosphorylribose-1-pyrophosphate (PRPP) to anthranilate to yield N-(5'-phosphoribosyl)-anthranilate (PRA). This chain is Anthranilate phosphoribosyltransferase, found in Persephonella marina (strain DSM 14350 / EX-H1).